Consider the following 232-residue polypeptide: uncharacterized protein (232 aa).

This is an uncharacterized protein from Acanthamoeba polyphaga (Amoeba).